Reading from the N-terminus, the 99-residue chain is Integration host factor subunit alpha (99 aa).

The tract at residues 49 to 71 (FGNFDLRDKNQRPGRNPKTGEDI) is disordered.

The protein belongs to the bacterial histone-like protein family. Heterodimer of an alpha and a beta chain.

Its function is as follows. This protein is one of the two subunits of integration host factor, a specific DNA-binding protein that functions in genetic recombination as well as in transcriptional and translational control. The polypeptide is Integration host factor subunit alpha (Shewanella denitrificans (strain OS217 / ATCC BAA-1090 / DSM 15013)).